Here is a 216-residue protein sequence, read N- to C-terminus: GTP cyclohydrolase-2 (216 aa).

51–55 (RIHSE) is a GTP binding site. Residues C56, C67, and C69 each coordinate Zn(2+). GTP is bound by residues Q72, 94 to 96 (EGR), and T116. The Proton acceptor role is filled by D128. The Nucleophile role is filled by R130. Residues T151 and K156 each contribute to the GTP site.

The protein belongs to the GTP cyclohydrolase II family. It depends on Zn(2+) as a cofactor.

It carries out the reaction GTP + 4 H2O = 2,5-diamino-6-hydroxy-4-(5-phosphoribosylamino)-pyrimidine + formate + 2 phosphate + 3 H(+). It participates in cofactor biosynthesis; riboflavin biosynthesis; 5-amino-6-(D-ribitylamino)uracil from GTP: step 1/4. Its function is as follows. Catalyzes the conversion of GTP to 2,5-diamino-6-ribosylamino-4(3H)-pyrimidinone 5'-phosphate (DARP), formate and pyrophosphate. The chain is GTP cyclohydrolase-2 from Haemophilus influenzae (strain 86-028NP).